A 591-amino-acid polypeptide reads, in one-letter code: Metastasis-associated protein MTA3 (591 aa).

One can recognise a BAH domain in the interval 1–147; the sequence is MAANMYRVGD…PSVKTLLADK (147 aa). Residues 148–258 enclose the ELM2 domain; the sequence is GEIRVGPKYQ…SAISVLVPLG (111 aa). Positions 265 to 317 constitute an SANT domain; it reads DEMEEWSASEACLFEEALEKYGKDFNDIRQDFLPWKSLTSIIEYYYMWKTTDR. Residues 377-404 form a GATA-type; atypical zinc finger; that stretch reads CESCYATQSHQWYSWGPPNMQCRLCATC. The segment at 417-456 is disordered; that stretch reads PTQSDEEKSPSPTAEDPRARSHMSRQALQGMPVRNTGSPK. Over residues 421 to 435 the composition is skewed to basic and acidic residues; sequence DEEKSPSPTAEDPRA. Phosphoserine occurs at positions 425 and 427. Thr-452 bears the Phosphothreonine mark. Ser-516 is subject to Phosphoserine.

Belongs to the metastasis-associated protein family. Component of the nucleosome remodeling and deacetylase (NuRD) repressor complex, composed of core proteins MTA1, MTA2, MTA3, RBBP4, RBBP7, HDAC1, HDAC2, MBD2, MBD3, and peripherally associated proteins CDK2AP1, CDK2AP2, GATAD2A, GATAD2B, CHD3, CHD4 and CHD5. The exact stoichiometry of the NuRD complex is unknown, and some subunits such as MBD2 and MBD3, GATAD2A and GATAD2B, and CHD3, CHD4 and CHD5 define mutually exclusive NuRD complexes. Interacts with BCL6. Interacts with NACC2. Interacts with PWWP2B. As to expression, expressed in heart, brain, spleen, lung, liver and kidney.

The protein resides in the nucleus. The protein localises to the cytoplasm. Its function is as follows. Acts as a component of the histone deacetylase NuRD complex which participates in the remodeling of chromatin. Plays a role in maintenance of the normal epithelial architecture through the repression of SNAI1 transcription in a histone deacetylase-dependent manner, and thus the regulation of E-cadherin levels. Contributes to transcriptional repression by BCL6. The polypeptide is Metastasis-associated protein MTA3 (Mta3) (Mus musculus (Mouse)).